A 92-amino-acid chain; its full sequence is Small ribosomal subunit protein uS19c (92 aa).

Belongs to the universal ribosomal protein uS19 family.

The protein resides in the plastid. The protein localises to the chloroplast. In terms of biological role, protein S19 forms a complex with S13 that binds strongly to the 16S ribosomal RNA. The protein is Small ribosomal subunit protein uS19c of Nymphaea alba (White water-lily).